A 374-amino-acid chain; its full sequence is Dual-specificity RNA methyltransferase RlmN (374 aa).

Residue Glu-94 is the Proton acceptor of the active site. In terms of domain architecture, Radical SAM core spans 100–339 (EEDRATLCVS…VTIRKTRGDD (240 aa)). A disulfide bridge links Cys-107 with Cys-344. [4Fe-4S] cluster contacts are provided by Cys-114, Cys-118, and Cys-121. S-adenosyl-L-methionine-binding positions include 168–169 (GE), Ser-200, 222–224 (SLH), and Asn-301. The active-site S-methylcysteine intermediate is Cys-344.

It belongs to the radical SAM superfamily. RlmN family. [4Fe-4S] cluster is required as a cofactor.

The protein resides in the cytoplasm. The catalysed reaction is adenosine(2503) in 23S rRNA + 2 reduced [2Fe-2S]-[ferredoxin] + 2 S-adenosyl-L-methionine = 2-methyladenosine(2503) in 23S rRNA + 5'-deoxyadenosine + L-methionine + 2 oxidized [2Fe-2S]-[ferredoxin] + S-adenosyl-L-homocysteine. It catalyses the reaction adenosine(37) in tRNA + 2 reduced [2Fe-2S]-[ferredoxin] + 2 S-adenosyl-L-methionine = 2-methyladenosine(37) in tRNA + 5'-deoxyadenosine + L-methionine + 2 oxidized [2Fe-2S]-[ferredoxin] + S-adenosyl-L-homocysteine. Functionally, specifically methylates position 2 of adenine 2503 in 23S rRNA and position 2 of adenine 37 in tRNAs. m2A2503 modification seems to play a crucial role in the proofreading step occurring at the peptidyl transferase center and thus would serve to optimize ribosomal fidelity. The polypeptide is Dual-specificity RNA methyltransferase RlmN (Vibrio vulnificus (strain YJ016)).